Here is a 597-residue protein sequence, read N- to C-terminus: Elongation factor 4 (597 aa).

A tr-type G domain is found at 2–184 (DHIRNFSIIA…ALVAKVPPPK (183 aa)). GTP contacts are provided by residues 14–19 (DHGKST) and 131–134 (NKID).

It belongs to the TRAFAC class translation factor GTPase superfamily. Classic translation factor GTPase family. LepA subfamily.

It is found in the cell inner membrane. The catalysed reaction is GTP + H2O = GDP + phosphate + H(+). Required for accurate and efficient protein synthesis under certain stress conditions. May act as a fidelity factor of the translation reaction, by catalyzing a one-codon backward translocation of tRNAs on improperly translocated ribosomes. Back-translocation proceeds from a post-translocation (POST) complex to a pre-translocation (PRE) complex, thus giving elongation factor G a second chance to translocate the tRNAs correctly. Binds to ribosomes in a GTP-dependent manner. The polypeptide is Elongation factor 4 (Paraburkholderia xenovorans (strain LB400)).